We begin with the raw amino-acid sequence, 124 residues long: Putative iron-sulfur cluster insertion protein ErpA (124 aa).

The iron-sulfur cluster site is built by C49, C113, and C115.

This sequence belongs to the HesB/IscA family. As to quaternary structure, homodimer. Iron-sulfur cluster serves as cofactor.

Functionally, required for insertion of 4Fe-4S clusters. In Acidovorax sp. (strain JS42), this protein is Putative iron-sulfur cluster insertion protein ErpA.